Reading from the N-terminus, the 172-residue chain is Zinc finger protein 580 (172 aa).

A disordered region spans residues 1–92; that stretch reads MLLLPPRPPH…PGEPGPRKGY (92 aa). Residues 19-30 show a composition bias toward pro residues; the sequence is MDPPPPKTPPFP. Lysine 31 is covalently cross-linked (Glycyl lysine isopeptide (Lys-Gly) (interchain with G-Cter in SUMO2)). Residues 92 to 114 form a C2H2-type 1 zinc finger; it reads YSCPECARVFASPLRLQSHRVSH. A Glycyl lysine isopeptide (Lys-Gly) (interchain with G-Cter in SUMO2) cross-link involves residue lysine 118. 2 C2H2-type zinc fingers span residues 120–142 and 150–172; these read FTCG…RATH and HTCP…VRLH.

As to quaternary structure, interacts with SMAD2.

The protein localises to the nucleus. Involved in the regulation of endothelial cell proliferation and migration. Mediates H(2)O(2)-induced leukocyte chemotaxis by elevating interleukin-8 production and may play a role in inflammation. May be involved in transcriptional regulation. This is Zinc finger protein 580 (Znf580) from Mus musculus (Mouse).